The following is a 321-amino-acid chain: o-succinylbenzoate synthase (321 aa).

The active-site Proton donor is lysine 134. Positions 162, 191, and 214 each coordinate Mg(2+). Residue lysine 236 is the Proton acceptor of the active site.

This sequence belongs to the mandelate racemase/muconate lactonizing enzyme family. MenC type 1 subfamily. A divalent metal cation is required as a cofactor.

The enzyme catalyses (1R,6R)-6-hydroxy-2-succinyl-cyclohexa-2,4-diene-1-carboxylate = 2-succinylbenzoate + H2O. The protein operates within quinol/quinone metabolism; 1,4-dihydroxy-2-naphthoate biosynthesis; 1,4-dihydroxy-2-naphthoate from chorismate: step 4/7. It participates in quinol/quinone metabolism; menaquinone biosynthesis. Its function is as follows. Converts 2-succinyl-6-hydroxy-2,4-cyclohexadiene-1-carboxylate (SHCHC) to 2-succinylbenzoate (OSB). The polypeptide is o-succinylbenzoate synthase (Enterobacter sp. (strain 638)).